Reading from the N-terminus, the 270-residue chain is Proteasome subunit beta (270 aa).

A propeptide spans 1–47 (MSNRGRLGDAFLRPGSSSFLDFLSDHAPELLPGRSAAAGNAPLAPHA) (removed in mature form; by autocatalysis). T48 serves as the catalytic Nucleophile.

The protein belongs to the peptidase T1B family. As to quaternary structure, the 20S proteasome core is composed of 14 alpha and 14 beta subunits that assemble into four stacked heptameric rings, resulting in a barrel-shaped structure. The two inner rings, each composed of seven catalytic beta subunits, are sandwiched by two outer rings, each composed of seven alpha subunits. The catalytic chamber with the active sites is on the inside of the barrel. Has a gated structure, the ends of the cylinder being occluded by the N-termini of the alpha-subunits. Is capped by the proteasome-associated ATPase, ARC.

It is found in the cytoplasm. The enzyme catalyses Cleavage of peptide bonds with very broad specificity.. It functions in the pathway protein degradation; proteasomal Pup-dependent pathway. Its activity is regulated as follows. The formation of the proteasomal ATPase ARC-20S proteasome complex, likely via the docking of the C-termini of ARC into the intersubunit pockets in the alpha-rings, may trigger opening of the gate for substrate entry. Interconversion between the open-gate and close-gate conformations leads to a dynamic regulation of the 20S proteasome proteolysis activity. Its function is as follows. Component of the proteasome core, a large protease complex with broad specificity involved in protein degradation. This is Proteasome subunit beta from Xylanimonas cellulosilytica (strain DSM 15894 / JCM 12276 / CECT 5975 / KCTC 9989 / LMG 20990 / NBRC 107835 / XIL07).